The primary structure comprises 316 residues: Pantothenate kinase (316 aa).

Position 95 to 102 (Gly-95 to Ser-102) interacts with ATP.

The protein belongs to the prokaryotic pantothenate kinase family.

The protein localises to the cytoplasm. It catalyses the reaction (R)-pantothenate + ATP = (R)-4'-phosphopantothenate + ADP + H(+). The protein operates within cofactor biosynthesis; coenzyme A biosynthesis; CoA from (R)-pantothenate: step 1/5. This Shewanella sp. (strain ANA-3) protein is Pantothenate kinase.